The chain runs to 388 residues: Oxytocin receptor (388 aa).

At 1–38 (MEGTPAANWSIELDLGSGVPPGAEGNLTAGPPRRNEAL) the chain is on the extracellular side. 2 N-linked (GlcNAc...) asparagine glycosylation sites follow: asparagine 8 and asparagine 26. Residues 39-63 (ARVEVAVLCLILFLALSGNACVLLA) form a helical membrane-spanning segment. Residues 64 to 74 (LRTTRHKHSRL) lie on the Cytoplasmic side of the membrane. The helical transmembrane segment at 75 to 97 (FFFMKHLSIADLVVAVFQVLPQL) threads the bilayer. Over 98–113 (LWDITFRFYGPDLLCR) the chain is Extracellular. Cysteine 112 and cysteine 187 are disulfide-bonded. The chain crosses the membrane as a helical span at residues 114-135 (LVKYLQVVGMFASTYLLLLMSL). Residues 136 to 154 (DRCLAICQPLRSLRRRTDR) are Cytoplasmic-facing. A helical membrane pass occupies residues 155 to 175 (LAVLATWLGCLVASVPQVHIF). Over 176–202 (SLREVADGVFDCWAVFIQPWGPKAYVT) the chain is Extracellular. A helical transmembrane segment spans residues 203 to 225 (WITLAVYIVPVIVLAACYGLISF). Residues 226–274 (KIWQNLRLKTAAAAAAAEGSDAAGGAGRAALARVSSVKLISKAKIRTVK) are Cytoplasmic-facing. The helical transmembrane segment at 275-293 (MTFIIVLAFIVCWTPFFFV) threads the bilayer. Residues 294-308 (QMWSVWDVNAPKEAS) are Extracellular-facing. Residues 309–331 (AFIIAMLLASLNSCCNPWIYMLF) traverse the membrane as a helical segment. Residues 332-388 (TGHLFHELVQRFLCCSARYLKGSRPGETSISKKSNSSTFVLSRRSSSQRSCSQPSSA) are Cytoplasmic-facing. Positions 354 to 388 (SRPGETSISKKSNSSTFVLSRRSSSQRSCSQPSSA) are disordered. Phosphoserine occurs at positions 365 and 367. A compositionally biased stretch (low complexity) spans 365-388 (SNSSTFVLSRRSSSQRSCSQPSSA).

It belongs to the G-protein coupled receptor 1 family. Vasopressin/oxytocin receptor subfamily.

The protein localises to the cell membrane. Receptor for oxytocin. The activity of this receptor is mediated by G proteins which activate a phosphatidylinositol-calcium second messenger system. This is Oxytocin receptor (Oxtr) from Mus musculus (Mouse).